The chain runs to 71 residues: Long neurotoxin 2 (71 aa).

5 disulfides stabilise this stretch: cysteine 3/cysteine 20, cysteine 14/cysteine 41, cysteine 26/cysteine 30, cysteine 45/cysteine 56, and cysteine 57/cysteine 62.

The protein belongs to the three-finger toxin family. Long-chain subfamily. Type II alpha-neurotoxin sub-subfamily. In terms of tissue distribution, expressed by the venom gland.

The protein resides in the secreted. Binds with high affinity to muscular (alpha-1/CHRNA1) and neuronal (alpha-7/CHRNA7) nicotinic acetylcholine receptor (nAChR) and inhibits acetylcholine from binding to the receptor, thereby impairing neuromuscular and neuronal transmission. The protein is Long neurotoxin 2 of Naja naja (Indian cobra).